The primary structure comprises 125 residues: Insulin growth factor-like family member 3 (125 aa).

Positions 1–24 are cleaved as a signal peptide; sequence MRPRCCILALVCWITVFLLQCSKG.

The protein belongs to the IGFL family. As to expression, detected in the cerebellum.

The protein localises to the secreted. Its function is as follows. Potential ligand of the IGFLR1 cell membrane receptor. The polypeptide is Insulin growth factor-like family member 3 (IGFL3) (Homo sapiens (Human)).